We begin with the raw amino-acid sequence, 256 residues long: Pimeloyl-[acyl-carrier protein] methyl ester esterase (256 aa).

Residues 15–242 (HLVLLHGWGL…AAHAPFISHP (228 aa)) form the AB hydrolase-1 domain. Residues Trp-22, 82-83 (SL), and 143-147 (FLALQ) each bind substrate. Ser-82 acts as the Nucleophile in catalysis. Catalysis depends on residues Asp-207 and His-235. His-235 is a substrate binding site.

This sequence belongs to the AB hydrolase superfamily. Carboxylesterase BioH family. Monomer.

It localises to the cytoplasm. It catalyses the reaction 6-carboxyhexanoyl-[ACP] methyl ester + H2O = 6-carboxyhexanoyl-[ACP] + methanol + H(+). Its pathway is cofactor biosynthesis; biotin biosynthesis. The physiological role of BioH is to remove the methyl group introduced by BioC when the pimeloyl moiety is complete. It allows to synthesize pimeloyl-ACP via the fatty acid synthetic pathway through the hydrolysis of the ester bonds of pimeloyl-ACP esters. The protein is Pimeloyl-[acyl-carrier protein] methyl ester esterase of Salmonella dublin (strain CT_02021853).